Consider the following 714-residue polypeptide: MSPEGEESHAEDNLYFHNTQMQSIHEETLAEESHAQAIQRSISRLSSFKHEDTDSESPIPVQKVIRQIKKTNTNTNTTKTKKRKLKVSKPRKNMSSSESVRQMYGSRKNGEQQGSIDGFLMSRFGEVDGCNESDRSSKLISQGEWESLSKFHEESNEKDKLLRKKIQRYYSEPQEELGEGCGMLTQASADPETKMTKEELESLYDLDSSTVFNQTTISAIGDMSEPTQVSEPCVVILSQTKVQSEASTQEDGADASVQEIKSTVPAQELFSTPEFVPAPLEQPVNKEMCSDQSIVVLEENVQSTQADDSDIVELISDSDPEPEEVSTKVQVLRSIYDSSGPVNDKQPSVASETVESDSTPIVSPVKTPQGTRMHVVQVASSNPSSPIKIVEENTEQQEEVFTDVESIYSTARTSFGTPKHTSPVILLESSDTDCDDNDNDVEPLSSMPMVKTVPKKRMRTTVLQVSAALKVQNYTDEKNNIKLRKIGDDIPVEVPTKDVEYEEIPDSQESVGGEGDNSVSIIEITREVHNNDYTGDESTDLFQVGLNKQDTCEDTSSPVVQIGGVENDILDSSLIEPVPEPESVPVPEEVQEQPQPTAIDKHTATQLREKFQLWGLKPVRGKEKMVEILQGISNFILPEHELLAVADKQELQSCIFRKLDAVIREGRAMYDRILSFEPIRLEELQSMLQSQDHYLELDVLRLYCDSSGITTTNA.

2 stretches are compositionally biased toward basic and acidic residues: residues Met1 to Leu14 and Ile24 to His34. Disordered regions lie at residues Met1–Gly114 and Ser338–Gln369. Positions Gln36–Ser46 are enriched in polar residues. Over residues Lys79–Lys92 the composition is skewed to basic residues.

The protein belongs to the SLX4 family. Forms a heterodimer with SLX1. In terms of processing, phosphorylated in response to DNA damage.

It localises to the nucleus. Its function is as follows. Regulatory subunit of the SLX1-SLX4 structure-specific endonuclease that resolves DNA secondary structures generated during DNA repair and recombination. Has endonuclease activity towards branched DNA substrates, introducing single-strand cuts in duplex DNA close to junctions with ss-DNA. This chain is Structure-specific endonuclease subunit SLX4 2, found in Candida tropicalis (strain ATCC MYA-3404 / T1) (Yeast).